Consider the following 51-residue polypeptide: uncharacterized protein (51 aa).

This is an uncharacterized protein from Borreliella burgdorferi (strain ATCC 35210 / DSM 4680 / CIP 102532 / B31) (Borrelia burgdorferi).